The primary structure comprises 429 residues: 3-phosphoshikimate 1-carboxyvinyltransferase (429 aa).

Residues Lys23, Ser24, and Arg28 each coordinate 3-phosphoshikimate. Position 23 (Lys23) interacts with phosphoenolpyruvate. Phosphoenolpyruvate is bound by residues Gly95 and Arg123. 3-phosphoshikimate contacts are provided by Ser168, Gln170, Asp316, and Lys343. Gln170 lines the phosphoenolpyruvate pocket. Asp316 serves as the catalytic Proton acceptor. Arg347 and Arg389 together coordinate phosphoenolpyruvate.

This sequence belongs to the EPSP synthase family. Monomer.

The protein localises to the cytoplasm. The catalysed reaction is 3-phosphoshikimate + phosphoenolpyruvate = 5-O-(1-carboxyvinyl)-3-phosphoshikimate + phosphate. Its pathway is metabolic intermediate biosynthesis; chorismate biosynthesis; chorismate from D-erythrose 4-phosphate and phosphoenolpyruvate: step 6/7. Functionally, catalyzes the transfer of the enolpyruvyl moiety of phosphoenolpyruvate (PEP) to the 5-hydroxyl of shikimate-3-phosphate (S3P) to produce enolpyruvyl shikimate-3-phosphate and inorganic phosphate. In Bacillus cereus (strain ATCC 10987 / NRS 248), this protein is 3-phosphoshikimate 1-carboxyvinyltransferase.